The primary structure comprises 696 residues: MKQPLIELKNIERYHTNGDTLTTVLKSINLKIYSGEMVAIVGASGSGKSTLMNIIGALDVPNSGEYFIYGRNIADLSGDELAELRCRHFGFVFQRYHLLSHLTAVKNVEVPAIYAMADKILRNQRANALLCQLGLEKQLENKPAQLSGGQQQRVSIARALMNGGDIILADEPTGALDSQSSQDVLKILKDLNRKGHTVILITHDLAIAEHADRVICIQDGKIVSDTANALESMIKPQNKRTFIDDAVIEVCQQHNTEKLNRPNEKNNIDNDNKENNNGYNRNDNSFLNNPKKKLNSSILRSFNSYAESFFMAFNMMMAHKIRTFLTMLGIIIGIIAVVFVIALGEGTKKKVLDEFSSLGNNTIDIFPGKWGDESDNVHTLNMEDLELLYQQPYVQRATPVLLHIAKARYLNKTMRSLINGVSHDFFMLKNYQLVTGRLFDQNDLTLSQPVGVIDKKSAKLLFDMDDPINKIIFIDDIPLSIIGVVESSSLQQNSGKEILIWIPHSTMATRILNQSYIQQISVQLQPNVSPLKSDKAIIDLLTIKHGQKDFYTFSSSRFLQSLNKTTQALTLMISSIAFISLIVGGIGIMNIMLVSVIERTKEIGIRIAVGAKERDIRFQFLIESTMVSLIGGCIGVGCALLFGGLFSLAETSIKIQFTLSSFLIAFLCSSMIGIVFGYFPARNAAKLRPVDALSRE.

One can recognise an ABC transporter domain in the interval 6 to 244; it reads IELKNIERYH…KPQNKRTFID (239 aa). Residue 42–49 participates in ATP binding; it reads GASGSGKS. Residues 254–287 are disordered; sequence HNTEKLNRPNEKNNIDNDNKENNNGYNRNDNSFL. Basic and acidic residues predominate over residues 255–274; the sequence is NTEKLNRPNEKNNIDNDNKE. Low complexity predominate over residues 275–284; sequence NNNGYNRNDN. Helical transmembrane passes span 324–344, 576–596, 626–646, and 659–679; these read FLTM…IALG, IAFI…LVSV, MVSL…GGLF, and LSSF…FGYF.

Belongs to the ABC transporter superfamily. Macrolide exporter (TC 3.A.1.122) family. As to quaternary structure, homodimer. Part of the tripartite efflux system MacAB-TolC, which is composed of an inner membrane transporter, MacB, a periplasmic membrane fusion protein, MacA, and an outer membrane component, TolC. The complex forms a large protein conduit and can translocate molecules across both the inner and outer membranes. Interacts with MacA.

The protein localises to the cell inner membrane. Its function is as follows. Part of the tripartite efflux system MacAB-TolC. MacB is a non-canonical ABC transporter that contains transmembrane domains (TMD), which form a pore in the inner membrane, and an ATP-binding domain (NBD), which is responsible for energy generation. Confers resistance against macrolides. The sequence is that of Macrolide export ATP-binding/permease protein MacB from Haemophilus ducreyi (strain 35000HP / ATCC 700724).